We begin with the raw amino-acid sequence, 514 residues long: Probable WRKY transcription factor 4 (514 aa).

Disordered stretches follow at residues 1–28 (MSEK…PPRP), 175–204 (QPQT…PLPA), and 278–394 (YKGQ…TVTE). Polar residues-rich tracts occupy residues 185–198 (QVQS…QIPT) and 286–299 (PPQN…DNTA). A DNA-binding region (WRKY 1) is located at residues 223–287 (NVDKPADDGY…YKGQHNHEPP (65 aa)). Residues 300–313 (NINGSSINNNRGSS) show a composition bias toward low complexity. A compositionally biased stretch (polar residues) spans 315–326 (LGASQFQTNSSN). Residues 359-380 (TDVREKDENEPDPKRRSTEVRI) show a composition bias toward basic and acidic residues. A DNA-binding region (WRKY 2) is located at residues 403 to 468 (SEVDLLDDGY…YEGKHNHDLP (66 aa)). Zn(2+) is bound by residues Cys-434, Thr-436, Cys-439, His-463, and His-465. Residues 464 to 514 (NHDLPAAKSSSHAAAAAQLRPDNRPGGLANLNQQQQQQPVARLRLKEEQTT) are disordered. A compositionally biased stretch (low complexity) spans 469–480 (AAKSSSHAAAAA).

In terms of tissue distribution, in young, mature and senescent leaves.

The protein resides in the nucleus. Functionally, transcription factor that binds specifically to the W box (5'-(T)TGAC[CT]-3'), a frequently occurring elicitor-responsive cis-acting element. Has a positive role in resistance to necrotrophic pathogens (e.g. Botrytis cinerea), but a negative effect on plant resistance to biotrophic pathogens (e.g. Pseudomonas syringae). The polypeptide is Probable WRKY transcription factor 4 (WRKY4) (Arabidopsis thaliana (Mouse-ear cress)).